The sequence spans 139 residues: MLSPKRTKFRHQHRGRIKGISSRGNRICFGRFALQALEPVWITSGQIEAGRRAITRYARRGVKIWIRIFPDKPIRTRPAEIRMGSGKAKGSPEYWVSVVKPGRILYEISGVSETIARAAFQIVAYKMPIHTKFITSLRK.

It belongs to the universal ribosomal protein uL16 family. As to quaternary structure, part of the 50S ribosomal subunit.

The protein localises to the plastid. The protein resides in the chloroplast. The chain is Large ribosomal subunit protein uL16c from Cryptomeria japonica (Japanese cedar).